Consider the following 358-residue polypeptide: Holliday junction branch migration complex subunit RuvB (358 aa).

The large ATPase domain (RuvB-L) stretch occupies residues 1–183; the sequence is MAEPSLVSGG…FGFTGHLEFY (183 aa). ATP-binding positions include leucine 22, arginine 23, glycine 64, lysine 67, threonine 68, threonine 69, 130–132, arginine 173, tyrosine 183, and arginine 220; that span reads EDF. Threonine 68 is a binding site for Mg(2+). The interval 184–254 is small ATPAse domain (RuvB-S); that stretch reads SVAELELVLR…SASAALDMYE (71 aa). The segment at 257–358 is head domain (RuvB-H); that stretch reads ERGLDRLDRS…NHAESVDTVG (102 aa). DNA contacts are provided by arginine 312 and arginine 317.

It belongs to the RuvB family. Homohexamer. Forms an RuvA(8)-RuvB(12)-Holliday junction (HJ) complex. HJ DNA is sandwiched between 2 RuvA tetramers; dsDNA enters through RuvA and exits via RuvB. An RuvB hexamer assembles on each DNA strand where it exits the tetramer. Each RuvB hexamer is contacted by two RuvA subunits (via domain III) on 2 adjacent RuvB subunits; this complex drives branch migration. In the full resolvosome a probable DNA-RuvA(4)-RuvB(12)-RuvC(2) complex forms which resolves the HJ.

Its subcellular location is the cytoplasm. It catalyses the reaction ATP + H2O = ADP + phosphate + H(+). The RuvA-RuvB-RuvC complex processes Holliday junction (HJ) DNA during genetic recombination and DNA repair, while the RuvA-RuvB complex plays an important role in the rescue of blocked DNA replication forks via replication fork reversal (RFR). RuvA specifically binds to HJ cruciform DNA, conferring on it an open structure. The RuvB hexamer acts as an ATP-dependent pump, pulling dsDNA into and through the RuvAB complex. RuvB forms 2 homohexamers on either side of HJ DNA bound by 1 or 2 RuvA tetramers; 4 subunits per hexamer contact DNA at a time. Coordinated motions by a converter formed by DNA-disengaged RuvB subunits stimulates ATP hydrolysis and nucleotide exchange. Immobilization of the converter enables RuvB to convert the ATP-contained energy into a lever motion, pulling 2 nucleotides of DNA out of the RuvA tetramer per ATP hydrolyzed, thus driving DNA branch migration. The RuvB motors rotate together with the DNA substrate, which together with the progressing nucleotide cycle form the mechanistic basis for DNA recombination by continuous HJ branch migration. Branch migration allows RuvC to scan DNA until it finds its consensus sequence, where it cleaves and resolves cruciform DNA. This Paenarthrobacter aurescens (strain TC1) protein is Holliday junction branch migration complex subunit RuvB.